The following is a 96-amino-acid chain: MSSQGEPKPEAQFAKRIDPTKEALTKEQLQFIRQVEMAQWKKKTDKLRGRNVATGLAIGAVVLGIYGYTFYSVSQEKIMDEIDEEAKVRVPKTGAN.

At 1-50 (MSSQGEPKPEAQFAKRIDPTKEALTKEQLQFIRQVEMAQWKKKTDKLRGR) the chain is on the mitochondrial matrix side. Residues 51–73 (NVATGLAIGAVVLGIYGYTFYSV) traverse the membrane as a helical segment. At 74-96 (SQEKIMDEIDEEAKVRVPKTGAN) the chain is on the mitochondrial intermembrane side.

The protein belongs to the COA3 family. As to quaternary structure, core component of the MITRAC (mitochondrial translation regulation assembly intermediate of cytochrome c oxidase complex) complex.

The protein localises to the mitochondrion inner membrane. Functionally, core component of the MITRAC (mitochondrial translation regulation assembly intermediate of cytochrome c oxidase complex) complex, that regulates cytochrome c oxidase assembly. MITRAC complexes regulate both translation of mitochondrial encoded components and assembly of nuclear-encoded components imported in mitochondrion. Required for efficient translation of MT-CO1 and mitochondrial respiratory chain complex IV assembly. In Danio rerio (Zebrafish), this protein is Cytochrome c oxidase assembly factor 3 homolog, mitochondrial (coa3a).